Consider the following 474-residue polypeptide: 3-isopropylmalate dehydratase large subunit (474 aa).

Positions 353, 413, and 416 each coordinate [4Fe-4S] cluster.

It belongs to the aconitase/IPM isomerase family. LeuC type 1 subfamily. In terms of assembly, heterodimer of LeuC and LeuD. The cofactor is [4Fe-4S] cluster.

The enzyme catalyses (2R,3S)-3-isopropylmalate = (2S)-2-isopropylmalate. It functions in the pathway amino-acid biosynthesis; L-leucine biosynthesis; L-leucine from 3-methyl-2-oxobutanoate: step 2/4. Functionally, catalyzes the isomerization between 2-isopropylmalate and 3-isopropylmalate, via the formation of 2-isopropylmaleate. The protein is 3-isopropylmalate dehydratase large subunit of Roseiflexus sp. (strain RS-1).